Here is a 194-residue protein sequence, read N- to C-terminus: NADH-quinone oxidoreductase subunit B (194 aa).

Cys73, Cys74, Cys138, and Cys168 together coordinate [4Fe-4S] cluster.

This sequence belongs to the complex I 20 kDa subunit family. In terms of assembly, NDH-1 is composed of 14 different subunits. Subunits NuoB, C, D, E, F, and G constitute the peripheral sector of the complex. [4Fe-4S] cluster is required as a cofactor.

It localises to the cell inner membrane. The enzyme catalyses a quinone + NADH + 5 H(+)(in) = a quinol + NAD(+) + 4 H(+)(out). Functionally, NDH-1 shuttles electrons from NADH, via FMN and iron-sulfur (Fe-S) centers, to quinones in the respiratory chain. The immediate electron acceptor for the enzyme in this species is believed to be ubiquinone. Couples the redox reaction to proton translocation (for every two electrons transferred, four hydrogen ions are translocated across the cytoplasmic membrane), and thus conserves the redox energy in a proton gradient. This is NADH-quinone oxidoreductase subunit B from Rhizobium leguminosarum bv. trifolii (strain WSM2304).